A 322-amino-acid polypeptide reads, in one-letter code: Ribokinase (322 aa).

Residues 25-27, 53-57, and E154 contribute to the substrate site; these read MTD and GKGAN. ATP-binding positions include N199, 235–240, and T256; that span reads TLGAEG. 2 residues coordinate K(+): D263 and T265. Residues 268 to 269 and N295 contribute to the ATP site; that span reads GD. Position 269 (D269) interacts with substrate. Catalysis depends on D269, which acts as the Proton acceptor. K(+)-binding residues include S301, A304, G306, and S310.

The protein belongs to the carbohydrate kinase PfkB family. Ribokinase subfamily. As to quaternary structure, homodimer. It depends on Mg(2+) as a cofactor.

It localises to the cytoplasm. The protein localises to the nucleus. It carries out the reaction D-ribose + ATP = D-ribose 5-phosphate + ADP + H(+). The protein operates within carbohydrate metabolism; D-ribose degradation; D-ribose 5-phosphate from beta-D-ribopyranose: step 2/2. Its activity is regulated as follows. Activated by a monovalent cation that binds near, but not in, the active site. The most likely occupant of the site in vivo is potassium. Ion binding induces a conformational change that may alter substrate affinity. Competitively inhibited by phosphonoacetic acid, etidronate, 2-carboxethylphosphonic acid, N-(phosphonomethyl)glycine, N-(phosphonomethyl)iminodiacetic acid and clodronate. In terms of biological role, catalyzes the phosphorylation of ribose at O-5 in a reaction requiring ATP and magnesium. The resulting D-ribose-5-phosphate can then be used either for sythesis of nucleotides, histidine, and tryptophan, or as a component of the pentose phosphate pathway. The chain is Ribokinase from Homo sapiens (Human).